The chain runs to 697 residues: MTELSKYRNIGIFAHVDAGKTTTTERILKLTGRIHKAGETHDGESTTDFMVQEAERGITIQSAAVSCFWKDHRFNVIDTPGHVDFTVEVYRSLKVLDGGIAVFCGSGGVEPQSETNWRYANESEVARIIFVNKLDRMGADFLRVVKQTKDVLAATPLVMVLPIGIEDEFKGVVDLLTRQAYVWDETGLPENYSIQEIPADMVDLVEEYREQLIETAVEQDDDLMEAYMEGEEPSIEDLKRCIRKGTRTMAFFPTFCGSAFKNKGMQLVLDAVVDYLPAPNEVDPQPLTDEEGNETGEYAIVSADESLKALAFKIMDDRFGALTFVRIYSGRLKKGDTILNSATGKTERIGRMCEMLANDRIEIESAEAGDIIAIVGMKNVQTGHTLCDVKYPCTLEAMVFPEPVISIAVAPKDKGGSEKMAIAIGKMIAEDPSFRVETDEDSGETILKGMGELHLDIKVDILKRTYGVELIVGEPQVAYRETITQMVEDQYTHKKQSGGSGQFGKIEYIIRPGEPNSGFVFKSSVVGGNVPKEYWPAVEKGFASMMNTGTIAGFPVLDVEFELTDGAYHAVDSSAIAFEIAAKAAFRQSIAKAKPQLLEPIMKVDVFSPDDNVGDVIGDLNRRRGMIKDQVAGVTGVRVKADVPLSEMFGYIGTLRTMTSGRGQFSMEFSHYSPCPNSVADKVVEQVKERKAAEAKK.

In terms of domain architecture, tr-type G spans 5–280 (SKYRNIGIFA…AVVDYLPAPN (276 aa)). GTP-binding positions include 14–21 (AHVDAGKT), 78–82 (DTPGH), and 132–135 (NKLD).

It belongs to the TRAFAC class translation factor GTPase superfamily. Classic translation factor GTPase family. EF-G/EF-2 subfamily.

The protein resides in the cytoplasm. Catalyzes the GTP-dependent ribosomal translocation step during translation elongation. During this step, the ribosome changes from the pre-translocational (PRE) to the post-translocational (POST) state as the newly formed A-site-bound peptidyl-tRNA and P-site-bound deacylated tRNA move to the P and E sites, respectively. Catalyzes the coordinated movement of the two tRNA molecules, the mRNA and conformational changes in the ribosome. The polypeptide is Elongation factor G 2 (Shewanella sp. (strain MR-4)).